Reading from the N-terminus, the 327-residue chain is Glycoprotein integral membrane protein 1 (327 aa).

The first 23 residues, 1–23 (MEGGLSAPLSVRLLLFIALPAAG), serve as a signal peptide directing secretion. The Extracellular portion of the chain corresponds to 24–259 (WLTTNAPRPP…LCRFWSSVVP (236 aa)). Residues Asn44, Asn62, and Asn146 are each glycosylated (N-linked (GlcNAc...) asparagine). The chain crosses the membrane as a helical span at residues 260–280 (VLFMFLDVMVVGVLGAAGVIA). Over 281-327 (VLKLLFPVCENKGILQVDKMNGISVPIILYPDGSEKTAQKLTDKTDI) the chain is Cytoplasmic.

The protein localises to the membrane. This Mus musculus (Mouse) protein is Glycoprotein integral membrane protein 1 (Ginm1).